Here is a 279-residue protein sequence, read N- to C-terminus: NH(3)-dependent NAD(+) synthetase (279 aa).

46-53 (GVSGGQDS) is an ATP binding site. Residue Asp-52 coordinates Mg(2+). Arg-139 serves as a coordination point for deamido-NAD(+). Thr-159 contacts ATP. A Mg(2+)-binding site is contributed by Glu-164. 2 residues coordinate deamido-NAD(+): Lys-172 and Asp-179. ATP-binding residues include Lys-188 and Thr-210. 259-260 (HK) contributes to the deamido-NAD(+) binding site.

This sequence belongs to the NAD synthetase family. In terms of assembly, homodimer.

The catalysed reaction is deamido-NAD(+) + NH4(+) + ATP = AMP + diphosphate + NAD(+) + H(+). It participates in cofactor biosynthesis; NAD(+) biosynthesis; NAD(+) from deamido-NAD(+) (ammonia route): step 1/1. Its function is as follows. Catalyzes the ATP-dependent amidation of deamido-NAD to form NAD. Uses ammonia as a nitrogen source. The polypeptide is NH(3)-dependent NAD(+) synthetase (Leifsonia xyli subsp. xyli (strain CTCB07)).